The following is a 751-amino-acid chain: Cytosolic neutral trehalase (751 aa).

Residues 1 to 15 are compositionally biased toward polar residues; sequence MDDSALPSNTSNGIN. Disordered regions lie at residues 1-42 and 64-88; these read MDDS…NPES and DFHEMLGDRNTRRGSMDPTSGNPRK. Over residues 64–78 the composition is skewed to basic and acidic residues; the sequence is DFHEMLGDRNTRRGS. D105, D107, N109, Q111, and D116 together coordinate Ca(2+). Substrate-binding positions include R292, 299 to 300, N336, 345 to 347, E412, R461, and G464; these read WD and RSQ. Active-site proton donor/acceptor residues include D466 and E670.

It belongs to the glycosyl hydrolase 37 family. It depends on Ca(2+) as a cofactor.

The protein localises to the cytoplasm. The catalysed reaction is alpha,alpha-trehalose + H2O = alpha-D-glucose + beta-D-glucose. The protein operates within carbohydrate degradation. Its activity is regulated as follows. Activated by calcium. In terms of biological role, hydrolyzes intracellular trehalose to glucose. The disaccharide trehalose serves as a storage carbohydrate that is mobilized during conidial germination. Regulates the level of trehalose as a protectant for cell integrity during heat stress. The chain is Cytosolic neutral trehalase from Emericella nidulans (strain FGSC A4 / ATCC 38163 / CBS 112.46 / NRRL 194 / M139) (Aspergillus nidulans).